The following is a 188-amino-acid chain: Small ribosomal subunit protein eS8 (188 aa).

Positions 1 to 34 (MGISRDSRHKRRLTGGRYPVHKKKRKYELGRPSS) are disordered. Basic residues predominate over residues 7–26 (SRHKRRLTGGRYPVHKKKRK).

The protein belongs to the eukaryotic ribosomal protein eS8 family.

The polypeptide is Small ribosomal subunit protein eS8 (RPS8) (Theileria parva (East coast fever infection agent)).